The chain runs to 603 residues: Aspartate--tRNA(Asp/Asn) ligase (603 aa).

Glu-182 is a binding site for L-aspartate. An aspartate region spans residues 206–209 (QLFK). An L-aspartate-binding site is contributed by Arg-228. Residues 228-230 (RDE) and Gln-237 each bind ATP. His-454 is an L-aspartate binding site. Glu-500 contacts ATP. Position 507 (Arg-507) interacts with L-aspartate. Position 552–555 (552–555 (GLDR)) interacts with ATP.

Belongs to the class-II aminoacyl-tRNA synthetase family. Type 1 subfamily. Homodimer.

Its subcellular location is the cytoplasm. The catalysed reaction is tRNA(Asx) + L-aspartate + ATP = L-aspartyl-tRNA(Asx) + AMP + diphosphate. Its function is as follows. Aspartyl-tRNA synthetase with relaxed tRNA specificity since it is able to aspartylate not only its cognate tRNA(Asp) but also tRNA(Asn). Reaction proceeds in two steps: L-aspartate is first activated by ATP to form Asp-AMP and then transferred to the acceptor end of tRNA(Asp/Asn). The polypeptide is Aspartate--tRNA(Asp/Asn) ligase (Aquifex aeolicus (strain VF5)).